A 492-amino-acid chain; its full sequence is 3-octaprenyl-4-hydroxybenzoate carboxy-lyase (492 aa).

Residue Asn177 participates in Mn(2+) binding. Residues 180 to 182 (IYR), 194 to 196 (RWL), and 199 to 200 (RG) contribute to the prenylated FMN site. Glu243 is a binding site for Mn(2+). The active-site Proton donor is the Asp292.

Belongs to the UbiD family. In terms of assembly, homohexamer. The cofactor is prenylated FMN. Requires Mn(2+) as cofactor.

It is found in the cell membrane. The enzyme catalyses a 4-hydroxy-3-(all-trans-polyprenyl)benzoate + H(+) = a 2-(all-trans-polyprenyl)phenol + CO2. Its pathway is cofactor biosynthesis; ubiquinone biosynthesis. In terms of biological role, catalyzes the decarboxylation of 3-octaprenyl-4-hydroxy benzoate to 2-octaprenylphenol, an intermediate step in ubiquinone biosynthesis. This Neisseria meningitidis serogroup A / serotype 4A (strain DSM 15465 / Z2491) protein is 3-octaprenyl-4-hydroxybenzoate carboxy-lyase.